Consider the following 224-residue polypeptide: Phosphoribosylformylglycinamidine synthase subunit PurQ (224 aa).

Positions 2 to 224 constitute a Glutamine amidotransferase type-1 domain; sequence KIAVIVFPGS…SLLEEGKVKG (223 aa). The active-site Nucleophile is Cys86. Residues His195 and Glu197 contribute to the active site.

As to quaternary structure, part of the FGAM synthase complex composed of 1 PurL, 1 PurQ and 2 PurS subunits.

Its subcellular location is the cytoplasm. It carries out the reaction N(2)-formyl-N(1)-(5-phospho-beta-D-ribosyl)glycinamide + L-glutamine + ATP + H2O = 2-formamido-N(1)-(5-O-phospho-beta-D-ribosyl)acetamidine + L-glutamate + ADP + phosphate + H(+). It catalyses the reaction L-glutamine + H2O = L-glutamate + NH4(+). Its pathway is purine metabolism; IMP biosynthesis via de novo pathway; 5-amino-1-(5-phospho-D-ribosyl)imidazole from N(2)-formyl-N(1)-(5-phospho-D-ribosyl)glycinamide: step 1/2. Functionally, part of the phosphoribosylformylglycinamidine synthase complex involved in the purines biosynthetic pathway. Catalyzes the ATP-dependent conversion of formylglycinamide ribonucleotide (FGAR) and glutamine to yield formylglycinamidine ribonucleotide (FGAM) and glutamate. The FGAM synthase complex is composed of three subunits. PurQ produces an ammonia molecule by converting glutamine to glutamate. PurL transfers the ammonia molecule to FGAR to form FGAM in an ATP-dependent manner. PurS interacts with PurQ and PurL and is thought to assist in the transfer of the ammonia molecule from PurQ to PurL. The protein is Phosphoribosylformylglycinamidine synthase subunit PurQ of Ligilactobacillus salivarius (strain UCC118) (Lactobacillus salivarius).